The following is a 2149-amino-acid chain: Oxygen-regulated protein 1 (2149 aa).

Over residues methionine 1 to glutamine 20 the composition is skewed to polar residues. The tract at residues methionine 1–arginine 25 is disordered. Positions lysine 36 to aspartate 118 constitute a Doublecortin 1 domain. Residues tryptophan 127–proline 148 are disordered. The Doublecortin 2 domain occupies arginine 152 to aspartate 231. 3 disordered regions span residues valine 351–serine 373, methionine 1435–arginine 1456, and valine 1583–leucine 1613. Residues serine 1446 to arginine 1456 are compositionally biased toward polar residues.

In terms of assembly, interacts (via the doublecortin domains) with microtubules. Interacts with RP1L1. Interacts with MAK.

Its subcellular location is the cytoplasm. The protein resides in the cytoskeleton. It is found in the cilium axoneme. The protein localises to the cell projection. It localises to the cilium. Its subcellular location is the photoreceptor outer segment. Its function is as follows. Microtubule-associated protein regulating the stability and length of the microtubule-based axoneme of photoreceptors. Required for the differentiation of photoreceptor cells, it plays a role in the organization of the outer segment of rod and cone photoreceptors ensuring the correct orientation and higher-order stacking of outer segment disks along the photoreceptor axoneme. This Saimiri boliviensis boliviensis (Bolivian squirrel monkey) protein is Oxygen-regulated protein 1 (RP1).